The sequence spans 215 residues: RNA pyrophosphohydrolase (215 aa).

Positions 6-149 constitute a Nudix hydrolase domain; it reads GFRPNVGIIL…KRDVYQLALT (144 aa). The Nudix box signature appears at 38-59; sequence GGIKYGETPMQAMYRELHEETG.

It belongs to the Nudix hydrolase family. RppH subfamily. Requires a divalent metal cation as cofactor.

Accelerates the degradation of transcripts by removing pyrophosphate from the 5'-end of triphosphorylated RNA, leading to a more labile monophosphorylated state that can stimulate subsequent ribonuclease cleavage. The sequence is that of RNA pyrophosphohydrolase from Burkholderia multivorans (strain ATCC 17616 / 249).